The sequence spans 226 residues: 2-C-methyl-D-erythritol 4-phosphate cytidylyltransferase (226 aa).

It belongs to the IspD/TarI cytidylyltransferase family. IspD subfamily.

The enzyme catalyses 2-C-methyl-D-erythritol 4-phosphate + CTP + H(+) = 4-CDP-2-C-methyl-D-erythritol + diphosphate. The protein operates within isoprenoid biosynthesis; isopentenyl diphosphate biosynthesis via DXP pathway; isopentenyl diphosphate from 1-deoxy-D-xylulose 5-phosphate: step 2/6. Catalyzes the formation of 4-diphosphocytidyl-2-C-methyl-D-erythritol from CTP and 2-C-methyl-D-erythritol 4-phosphate (MEP). The sequence is that of 2-C-methyl-D-erythritol 4-phosphate cytidylyltransferase from Rhodococcus opacus (strain B4).